The following is a 505-amino-acid chain: MTAPVYDYSDDVMDFDEVLEHFDPVMGMEVHVELATKTKMFSTSSAEFGDAPNSNVDPCSLGLPGALPVVNKLGVEWAIKIGLALNCEIAPKSRFARKNYFYPDQPKNYQISQYDEPIAYDGYLDVVLEDGTEWRVEIERAHMEEDTGKLTHLGGADGRIHGATASLVDCNRAGVPLIEIVTKPIEGAGERAPEVAKAYVSALRDLVKALGVSDARMDQGSMRVDSNLSLRPVGTTEYGTRTETKNINSLKSVEQAVRFEMQRQAACLVNDVEIVQETRHYQETDGTTSKGRPKETMADYRYFNDPDLPPVLAPAEWVEEIRATLPEMPWIRRARIQEEWGLKDEEMRDLVNAGALDLVVDTVEAGAKPDEARSWWVSYLAGKANEQGVELSGLDITPTQVARVASLVNEGKLTTKLARQAVDGVLAGEGDVDEVVAARGLEVVRDDGAIEAAVDEALAANPDIVEKYRAGNKKVTGAIVGAVMKATKGKADPAQVNQLIAKKLS.

It belongs to the GatB/GatE family. GatB subfamily. Heterotrimer of A, B and C subunits.

The enzyme catalyses L-glutamyl-tRNA(Gln) + L-glutamine + ATP + H2O = L-glutaminyl-tRNA(Gln) + L-glutamate + ADP + phosphate + H(+). The catalysed reaction is L-aspartyl-tRNA(Asn) + L-glutamine + ATP + H2O = L-asparaginyl-tRNA(Asn) + L-glutamate + ADP + phosphate + 2 H(+). Allows the formation of correctly charged Asn-tRNA(Asn) or Gln-tRNA(Gln) through the transamidation of misacylated Asp-tRNA(Asn) or Glu-tRNA(Gln) in organisms which lack either or both of asparaginyl-tRNA or glutaminyl-tRNA synthetases. The reaction takes place in the presence of glutamine and ATP through an activated phospho-Asp-tRNA(Asn) or phospho-Glu-tRNA(Gln). This is Aspartyl/glutamyl-tRNA(Asn/Gln) amidotransferase subunit B from Corynebacterium jeikeium (strain K411).